The primary structure comprises 338 residues: Lipoate-protein ligase A (338 aa).

Residues 29 to 216 enclose the BPL/LPL catalytic domain; that stretch reads PATQRVLFLW…AFFAYYGERV (188 aa). ATP is bound by residues Arg-71, 76–79, and Lys-134; that span reads GAVF. A (R)-lipoate-binding site is contributed by Lys-134.

The protein belongs to the LplA family. In terms of assembly, monomer.

The protein resides in the cytoplasm. The catalysed reaction is L-lysyl-[lipoyl-carrier protein] + (R)-lipoate + ATP = N(6)-[(R)-lipoyl]-L-lysyl-[lipoyl-carrier protein] + AMP + diphosphate + H(+). It participates in protein modification; protein lipoylation via exogenous pathway; protein N(6)-(lipoyl)lysine from lipoate: step 1/2. Its pathway is protein modification; protein lipoylation via exogenous pathway; protein N(6)-(lipoyl)lysine from lipoate: step 2/2. In terms of biological role, catalyzes both the ATP-dependent activation of exogenously supplied lipoate to lipoyl-AMP and the transfer of the activated lipoyl onto the lipoyl domains of lipoate-dependent enzymes. This is Lipoate-protein ligase A from Cronobacter sakazakii (strain ATCC BAA-894) (Enterobacter sakazakii).